The primary structure comprises 51 residues: Basic phospholipase A2 Bfon11 (51 aa).

Positions 27, 29, and 31 each coordinate Ca(2+). Residues Cys28 and Cys43 are joined by a disulfide bond. His46 is a catalytic residue. Ca(2+) is bound at residue Asp47.

The protein belongs to the phospholipase A2 family. Group II subfamily. D49 sub-subfamily. Requires Ca(2+) as cofactor. As to expression, expressed by the venom gland.

It is found in the secreted. It carries out the reaction a 1,2-diacyl-sn-glycero-3-phosphocholine + H2O = a 1-acyl-sn-glycero-3-phosphocholine + a fatty acid + H(+). Functionally, snake venom phospholipase A2 (PLA2) that impairs hemostasis. PLA2 catalyzes the calcium-dependent hydrolysis of the 2-acyl groups in 3-sn-phosphoglycerides. This Bothrops fonsecai (Fonseca's lancehead) protein is Basic phospholipase A2 Bfon11.